Here is a 176-residue protein sequence, read N- to C-terminus: Cytochrome b (176 aa).

3 helical membrane-spanning segments follow: residues 33-53, 77-98, and 113-133; these read FGSLLGVCLTVQILTGLFLAM, WLLRYLHANGASMFFICLYLHV, and WNVGVILLFAVMATAFMGYVL. H83 and H97 together coordinate heme b.

The protein belongs to the cytochrome b family. The cytochrome bc1 complex contains 11 subunits: 3 respiratory subunits (MT-CYB, CYC1 and UQCRFS1), 2 core proteins (UQCRC1 and UQCRC2) and 6 low-molecular weight proteins (UQCRH/QCR6, UQCRB/QCR7, UQCRQ/QCR8, UQCR10/QCR9, UQCR11/QCR10 and a cleavage product of UQCRFS1). This cytochrome bc1 complex then forms a dimer. Heme b serves as cofactor.

Its subcellular location is the mitochondrion inner membrane. Its function is as follows. Component of the ubiquinol-cytochrome c reductase complex (complex III or cytochrome b-c1 complex) that is part of the mitochondrial respiratory chain. The b-c1 complex mediates electron transfer from ubiquinol to cytochrome c. Contributes to the generation of a proton gradient across the mitochondrial membrane that is then used for ATP synthesis. This is Cytochrome b (MT-CYB) from Mormopterus kalinowskii (Kalinowski's mastiff bat).